A 322-amino-acid chain; its full sequence is tRNA dimethylallyltransferase (322 aa).

Residue G12–T19 participates in ATP binding. A substrate-binding site is contributed by T14 to T19. Interaction with substrate tRNA stretches follow at residues D37–L40 and Q160–R164.

The protein belongs to the IPP transferase family. In terms of assembly, monomer. Mg(2+) is required as a cofactor.

It carries out the reaction adenosine(37) in tRNA + dimethylallyl diphosphate = N(6)-dimethylallyladenosine(37) in tRNA + diphosphate. In terms of biological role, catalyzes the transfer of a dimethylallyl group onto the adenine at position 37 in tRNAs that read codons beginning with uridine, leading to the formation of N6-(dimethylallyl)adenosine (i(6)A). The protein is tRNA dimethylallyltransferase of Pseudomonas putida (Arthrobacter siderocapsulatus).